Here is a 359-residue protein sequence, read N- to C-terminus: Centromere-binding protein 1 (359 aa).

Residues 1–262 (MSGKRSYQDD…SHKEVERRRR (262 aa)) form a disordered region. Residues 55-78 (KENKENRDGDKVGDDEHDVVKGES) show a composition bias toward basic and acidic residues. A compositionally biased stretch (acidic residues) spans 120-161 (GDEDEDEDEEEEEDEDDHVDIDDVDKDPDAVIDEDDDEEDED). Positions 249-259 (QRKESHKEVER) are enriched in basic and acidic residues. A bHLH domain is found at 249-297 (QRKESHKEVERRRRQNINTAIEKLSDLLPVKETSKAAILSRAAEYIQKM).

In terms of assembly, binds DNA as a dimer.

The protein resides in the nucleus. It localises to the chromosome. It is found in the centromere. Its function is as follows. Required for chromosome stability and methionine prototrophy. It is involved in chromosomal segregation. Binds to a highly conserved DNA sequence (5'-RTCACRTG-3'), called CDEI, found in centromeres and in several promoters. The polypeptide is Centromere-binding protein 1 (CBF1) (Kluyveromyces lactis (strain ATCC 8585 / CBS 2359 / DSM 70799 / NBRC 1267 / NRRL Y-1140 / WM37) (Yeast)).